The chain runs to 357 residues: Geranylgeranyl pyrophosphate synthase, chloroplastic (357 aa).

The N-terminal 40 residues, 1-40 (MRSNLCHPLKNQLPISFFLSGTIRKPIFSCSRLSISAIIT), are a transit peptide targeting the chloroplast. Lysine 106, arginine 109, and histidine 138 together coordinate isopentenyl diphosphate. Mg(2+)-binding residues include aspartate 145 and aspartate 151. Arginine 156 contributes to the dimethylallyl diphosphate binding site. Position 157 (arginine 157) interacts with isopentenyl diphosphate. Positions 242, 243, 280, 297, and 307 each coordinate dimethylallyl diphosphate.

This sequence belongs to the FPP/GGPP synthase family. Requires Mg(2+) as cofactor.

The protein resides in the plastid. It localises to the chloroplast. The enzyme catalyses isopentenyl diphosphate + dimethylallyl diphosphate = (2E)-geranyl diphosphate + diphosphate. It catalyses the reaction isopentenyl diphosphate + (2E)-geranyl diphosphate = (2E,6E)-farnesyl diphosphate + diphosphate. It carries out the reaction isopentenyl diphosphate + (2E,6E)-farnesyl diphosphate = (2E,6E,10E)-geranylgeranyl diphosphate + diphosphate. It functions in the pathway isoprenoid biosynthesis; farnesyl diphosphate biosynthesis; farnesyl diphosphate from geranyl diphosphate and isopentenyl diphosphate: step 1/1. The protein operates within isoprenoid biosynthesis; geranyl diphosphate biosynthesis; geranyl diphosphate from dimethylallyl diphosphate and isopentenyl diphosphate: step 1/1. It participates in isoprenoid biosynthesis; geranylgeranyl diphosphate biosynthesis; geranylgeranyl diphosphate from farnesyl diphosphate and isopentenyl diphosphate: step 1/1. Catalyzes the trans-addition of the three molecules of IPP onto DMAPP to form geranylgeranyl pyrophosphate. The sequence is that of Geranylgeranyl pyrophosphate synthase, chloroplastic (GGPS1) from Catharanthus roseus (Madagascar periwinkle).